Consider the following 152-residue polypeptide: Transcriptional regulator MraZ (152 aa).

2 SpoVT-AbrB domains span residues 5–52 (ASSL…PLAQ) and 81–124 (ATEY…DEAR).

This sequence belongs to the MraZ family. As to quaternary structure, forms oligomers.

Its subcellular location is the cytoplasm. It localises to the nucleoid. This chain is Transcriptional regulator MraZ, found in Pseudoalteromonas translucida (strain TAC 125).